The sequence spans 1392 residues: ATP-dependent helicase/nuclease subunit A (1392 aa).

One can recognise a UvrD-like helicase ATP-binding domain in the interval 3-489; sequence NPKWTPAQQA…IDLNQNFRSR (487 aa). ATP is bound at residue 24-31; that stretch reads AAAGSGKT. Disordered stretches follow at residues 291-319, 555-594, and 1051-1126; these read RGSK…KARD, KRGA…LEEA, and GPVQ…LDTK. Composition is skewed to basic and acidic residues over residues 305-319 and 567-583; these read ENSK…KARD and SPAK…REPE. The UvrD-like helicase C-terminal domain maps to 556–886; the sequence is RGAEDAATEV…RFITVHSSKG (331 aa). Residues 584–594 show a composition bias toward acidic residues; sequence SGDDESSLEEA. The segment covering 1088 to 1113 has biased composition (basic and acidic residues); that stretch reads ASGKTEIPGETKNSEETKTSEDKKNL.

This sequence belongs to the helicase family. AddA subfamily. As to quaternary structure, heterodimer of AddA and AddB/RexB. Mg(2+) is required as a cofactor.

It catalyses the reaction Couples ATP hydrolysis with the unwinding of duplex DNA by translocating in the 3'-5' direction.. It carries out the reaction ATP + H2O = ADP + phosphate + H(+). The heterodimer acts as both an ATP-dependent DNA helicase and an ATP-dependent, dual-direction single-stranded exonuclease. Recognizes the chi site generating a DNA molecule suitable for the initiation of homologous recombination. The AddA nuclease domain is required for chi fragment generation; this subunit has the helicase and 3' -&gt; 5' nuclease activities. This Desulfitobacterium hafniense (strain DSM 10664 / DCB-2) protein is ATP-dependent helicase/nuclease subunit A.